The chain runs to 479 residues: MAQHAVYFPDAFLTQMREAMPSTLSFDDFLAACQRPLRRSIRVNTLKISVTDFLALTAPYGWSLTPVPWCEEGFWIERDDEESLPLGSTAEHLSGLFYIQEASSMLPVAALFAEGNTPERIMDVAAAPGSKTTQIAARMNNQGAILANEFSASRVKVLHANISRCGISNVALTHFDGRVFGAALPETFDAILLDAPCSGEGVVRKDPDALKNWSVESNLDIAATQRELIDSAFHALRPGGTLVYSTCTLNREENESVCLWLKETYPEAVEFLPLGDLFPGAERALTAEGFLHVFPQIYDCEGFFVARLRKTAAIPPLPAPGYKVGKFPFAPMKGREATQITQAANASGLQWGENLHLWQRDKEVWLFPAEIEALIGKVRFSRLGIKLAESHNKGYRWQHEAVIALADPHHANAFELSHQEAEEWYRGRDVYPQTAPSADDVLVTFQHQPIGLAKRIGSRLKNSYPRELVRDGKLFTGND.

S-adenosyl-L-methionine-binding positions include 125-131, glutamate 149, aspartate 176, and aspartate 194; that span reads AAAPGSK. The Nucleophile role is filled by cysteine 247.

The protein belongs to the class I-like SAM-binding methyltransferase superfamily. RsmB/NOP family.

Its subcellular location is the cytoplasm. The enzyme catalyses cytidine(1407) in 16S rRNA + S-adenosyl-L-methionine = 5-methylcytidine(1407) in 16S rRNA + S-adenosyl-L-homocysteine + H(+). Functionally, specifically methylates the cytosine at position 1407 (m5C1407) of 16S rRNA. The polypeptide is Ribosomal RNA small subunit methyltransferase F (Citrobacter koseri (strain ATCC BAA-895 / CDC 4225-83 / SGSC4696)).